The sequence spans 739 residues: Vascular cell adhesion protein 1 (739 aa).

The first 24 residues, 1-24 (MPGKMVVILGASNILWIMFAASQA), serve as a signal peptide directing secretion. 7 consecutive Ig-like C2-type domains span residues 25 to 105 (FKIE…RKLE), 109 to 212 (QVEI…TVRQ), 223 to 309 (PKNT…LIVQ), 312 to 399 (PFTV…IQVE), 408 to 506 (EIEM…QTLY), 511 to 595 (PRDT…VELI), and 600 to 684 (PKDI…LTLD). The Extracellular segment spans residues 25 to 698 (FKIETTPESR…ENNKDYFSPE (674 aa)). Disulfide bonds link cysteine 47–cysteine 95, cysteine 52–cysteine 99, cysteine 137–cysteine 195, cysteine 246–cysteine 291, and cysteine 335–cysteine 383. 6 N-linked (GlcNAc...) asparagine glycosylation sites follow: asparagine 273, asparagine 365, asparagine 417, asparagine 463, asparagine 531, and asparagine 561. Cysteine 534 and cysteine 579 form a disulfide bridge. A helical membrane pass occupies residues 699–720 (LLVLYFASSLIIPAIGMIIYFA). The Cytoplasmic segment spans residues 721–739 (RKANMKGSYSLVEAQKSKV).

Post-translationally, cleaved by the metalloproteinase ADAM17 to generate the soluble form. Sialoglycoprotein. In terms of processing, ubiquitinated by TRIM65 via 'Lys-48'-linked ubiquitination; leading to proteasomal degradation. Expressed on inflamed vascular endothelium, as well as on macrophage-like and dendritic cell types in both normal and inflamed tissue.

The protein resides in the cell membrane. The protein localises to the secreted. Its function is as follows. Cell adhesion glycoprotein predominantly expressed on the surface of endothelial cells that plays an important role in immune surveillance and inflammation. Acts as a major regulator of leukocyte adhesion to the endothelium through interaction with different types of integrins. During inflammatory responses, binds ligands on the surface of activated endothelial cells to initiate the activation of calcium channels and the plasma membrane-associated small GTPase RAC1 leading to leukocyte transendothelial migration. Also serves as a quality-control checkpoint for entry into bone marrow by providing a 'don't-eat-me' stamping in the context of major histocompatibility complex (MHC) class-I presentation. The polypeptide is Vascular cell adhesion protein 1 (VCAM1) (Homo sapiens (Human)).